We begin with the raw amino-acid sequence, 224 residues long: MSTMPEDIAAAQRLEQACQSLGLAAGAEQQEKLLRYMAQMQRWNRTYNLTAIRDPEQMLIQHLFDSLSVVQPLVRALQAGQPAKVYDVGSGGGLPGVVLAIVQPEWDITCVDAVEKKTAFVQQMAGTLMLPNLHAMHARIERVAPADCDVVISRAFASLHDFANLAGRHVRPGGTLVAMKGKVPAEEIEGLPAAWQVERIEPLQVPELDAERCLIWMRRSQGTL.

S-adenosyl-L-methionine contacts are provided by residues G89, L94, 140 to 141 (IE), and R154.

This sequence belongs to the methyltransferase superfamily. RNA methyltransferase RsmG family.

It is found in the cytoplasm. The enzyme catalyses guanosine(527) in 16S rRNA + S-adenosyl-L-methionine = N(7)-methylguanosine(527) in 16S rRNA + S-adenosyl-L-homocysteine. Its function is as follows. Specifically methylates the N7 position of guanine in position 527 of 16S rRNA. The polypeptide is Ribosomal RNA small subunit methyltransferase G (Bordetella avium (strain 197N)).